Reading from the N-terminus, the 430-residue chain is KIN17-like protein (430 aa).

Residues 28–50 (CQMCQKQCRDENGFKCHCMSESH) form a C2H2-type zinc finger. Residues 51-160 (QRQMQVFGQA…KARLKRKRIK (110 aa)) are winged helix-turn-helix (wHTH). A coiled-coil region spans residues 147–183 (EQAVKARLKRKRIKSDLAEDERQERMIARQIERAQQS). The Nuclear localization signal (NLS) signature appears at 155–158 (KRKR). 2 disordered regions span residues 179–230 (RAQQ…ANKA) and 261–284 (EEED…GKDA). The span at 209-224 (EYSDSENDHEGQEEDA) shows a compositional bias: acidic residues. A compositionally biased stretch (basic and acidic residues) spans 261-278 (EEEDEVSARDKEKEELAK). A coiled-coil region spans residues 283 to 312 (DAINAAEARRSALDELMKEEEKAKERSNRK). Residues 319 to 370 (GIVVKVMSKSLAEKGYCKQKGVVKRVIDKYVGEIEMLESKHVLRVDQDELET) are C-terminal subdomain A. A C-terminal subdomain B region spans residues 376 to 427 (GGLVRIVNGAYRGSNARLLSVDTERFCAKVQVEKGLYDGKVLKAIEYEDICK).

The protein belongs to the KIN17 family.

It is found in the nucleus. The protein is KIN17-like protein of Oryza sativa subsp. indica (Rice).